A 325-amino-acid chain; its full sequence is Mitochondrial amidoxime-reducing component 1 (325 aa).

At 1 to 16 the chain is on the mitochondrial matrix side; that stretch reads MDLKEAFATIFDQNRK. Residues 17-36 traverse the membrane as a helical; Signal-anchor for type II membrane protein segment; that stretch reads VALYAAGTTVAVLGLGLVFK. Topologically, residues 37–325 are cytoplasmic; sequence YMRREEKLTR…VGEPVYKITY (289 aa). 3 residues coordinate Mo-molybdopterin: Lys-59, Ser-60, and Arg-84. Residues 85–175 are MOSC N-terminal region; that stretch reads HWLVITEDGH…ADKPVRLVHY (91 aa). One can recognise an MOSC domain in the interval 179–323; the sequence is LKPQRPHEKE…LHVGEPVYKI (145 aa). Residues Arg-230, Arg-264, Cys-265, and Tyr-305 each coordinate Mo-molybdopterin.

Mo-molybdopterin is required as a cofactor.

It localises to the mitochondrion outer membrane. The protein localises to the membrane. It carries out the reaction N(omega)-hydroxy-L-arginine + 2 Fe(II)-[cytochrome b5] + 2 H(+) = L-arginine + 2 Fe(III)-[cytochrome b5] + H2O. Its function is as follows. Catalyzes the reduction of N-oxygenated molecules, acting as a counterpart of cytochrome P450 and flavin-containing monooxygenases in metabolic cycles. As a component of prodrug-converting system, reduces a multitude of N-hydroxylated prodrugs particularly amidoximes, leading to increased drug bioavailability. May be involved in mitochondrial N(omega)-hydroxy-L-arginine (NOHA) reduction, regulating endogenous nitric oxide levels and biosynthesis. Postulated to cleave the N-OH bond of N-hydroxylated substrates in concert with electron transfer from NADH to cytochrome b5 reductase then to cytochrome b5, the ultimate electron donor that primes the active site for substrate reduction. The chain is Mitochondrial amidoxime-reducing component 1 (mtarc1) from Danio rerio (Zebrafish).